A 632-amino-acid chain; its full sequence is Probable potassium transport system protein Kup 3 (632 aa).

Helical transmembrane passes span 17–37 (LFYL…TSPL), 60–80 (LISL…VLFL), 106–126 (TAIL…DAMI), 144–164 (PSLS…LFVV), 175–195 (FFGP…ISHI), 210–230 (AVSF…AVFL), 254–274 (WFLL…ALVL), 292–312 (ALLP…QAVI), 344–364 (IFVP…VLSF), 370–390 (LATA…IMAF), 401–421 (LPLA…FLGA), and 426–446 (IHDG…IMWT).

Belongs to the HAK/KUP transporter (TC 2.A.72) family.

It is found in the cell inner membrane. The catalysed reaction is K(+)(in) + H(+)(in) = K(+)(out) + H(+)(out). Transport of potassium into the cell. Likely operates as a K(+):H(+) symporter. In Rhizobium etli (strain ATCC 51251 / DSM 11541 / JCM 21823 / NBRC 15573 / CFN 42), this protein is Probable potassium transport system protein Kup 3.